Here is a 462-residue protein sequence, read N- to C-terminus: MSFPQLGYPQYLTAGQGAVYGGERPGVLAAAAAAAAAAGRPTGAELGSCPTAAVTSVLGMYASPYSSPNYSAFLPYTTDLTLFSQMGSQYELKDNPGVHPATFAAHTTPGYYPYGQFQYGDPGRPKNATRESTSTLKAWLNEHRKNPYPTKGEKIMLAIITKMTLTQVSTWFANARRRLKKENKVTWGAMGKEDDNIFGSDNEGDHEKNEDDEEIDLESIDIDKIDDNDGEQSNEEEDEKLDHFRHGEKVSLKKESEVMIPSSDGLKPKDSLSLGKECSDTSNTRIVSPGGQGNIQAPPHSKPKIWSLAETATSPDGALKSSPPPSQANHTSPQMQHPAFLPSHGLYTCQIGKFHNWTNGAFLTQSSLINMRSLLGVNPHHAAHHNHHHLQAHQQSTLLATNLGSLSSDRTPERTSPKHSDRENLPRTESPPQLKPSFQAVREKTFSQQEGTSRILTALPSA.

The homeobox; TALE-type DNA-binding region spans 121–183; it reads DPGRPKNATR…NARRRLKKEN (63 aa). Disordered regions lie at residues 191–302, 314–339, and 405–462; these read GKED…PHSK, SPDG…QHPA, and SLSS…LPSA. Acidic residues-rich tracts occupy residues 210–220 and 228–239; these read EDDEEIDLESI and NDGEQSNEEEDE. The segment covering 240–257 has biased composition (basic and acidic residues); that stretch reads KLDHFRHGEKVSLKKESE. Residues 410–426 are compositionally biased toward basic and acidic residues; that stretch reads RTPERTSPKHSDRENLP. A compositionally biased stretch (polar residues) spans 446–455; that stretch reads FSQQEGTSRI.

Belongs to the TALE/IRO homeobox family.

The protein resides in the nucleus. In terms of biological role, acts partially redundantly with other irx members in neural patterning. Required for formation of the posterior forebrain, midbrain, hindbrain, and to a lesser extent, spinal cord. Acts early in neural plate development to induce expression of some but not all proneural genes, and specify a neural precursor state. Also up-regulates repressors that prevent neuronal differentiation. Patterns the neuroectoderm in both the anterior/posterior and dorsal/ventral axes. Acts primarily as a transcriptional repressor during neural development, and binds to the bmp4 promoter to repress gene expression and thus mediate down-regulation of bmp4 by wnt signaling. Controls multiple processes through bmp4-repression including neural plate development, neural crest specification and Spemann organizer development. Involved in the specification of the preplacodal field at the anterior border of the neural plate. Regulates the genetic cascade of interactions that are necessary for positioning the isthmus organizer and the formation of the midbrain-hindbrain boundary. Required during at least two stages of pronephros kidney development; during neurula stages, maintains transcription of key renal genes to define the size and identity of the pronephric anlage, probably in part through regulation of bmp-signaling. Subsequently required for proper formation of the intermediate tubule segment of the pronephros. Acts principally as a transcriptional activator during pronephros development. In Xenopus laevis (African clawed frog), this protein is Iroquois-class homeodomain protein irx-1-B (irx1-b).